The chain runs to 451 residues: MFSEVMRYILDLGPTVMLPIVIIIFSKILGMKAGDCFKAGLHIGIGFVGIGLVIGLMLDSIGPAAKAMAENFDLNLHVVDVGWPGSSPMTWASQIALVAIPIAILVNVAMLLTRMTRVVNVDIWNIWHMTFTGALLHLATGSWMIGMAGVVIHAAFVYKLGDWFARDTRNFFELEGIAIPHGTSAYMGPIAVLVDAIIEKIPGVNRIKFSADDIQRKFGPFGEPVTVGFVMGLIIGILAGYDVKGVLQLAVKTAAVMLLMPRVIKPIMDGLTPIAKQARSRLQAKFGGQEFLIGLDPALLLGHTAVVSASLIFIPLTILIAVCVPGNQVLPFGDLATIGFFVAMAVAVHRGNLFRTLISGVIIMSITLWIATQTIGLHTQLAANAGALKAGGMVASMDQGGSPITWLLIQVFSPQNIPGFIIIGAIYLTGIFMTWRRARGFIKQEKVVLAE.

One can recognise a PTS EIIC type-2 domain in the interval 6-435 (MRYILDLGPT…IYLTGIFMTW (430 aa)). 10 consecutive transmembrane segments (helical) span residues 9-29 (ILDL…SKIL), 41-61 (LHIG…LDSI), 92-112 (ASQI…AMLL), 138-158 (LATG…AFVY), 218-238 (FGPF…IGIL), 305-325 (AVVS…VCVP), 329-349 (VLPF…VAVH), 357-377 (LISG…TIGL), 392-412 (GMVA…IQVF), and 415-435 (QNIP…FMTW).

As to quaternary structure, forms a complex with one each of subunit of GatA, GatB and 2 subunits of GatC.

It localises to the cell inner membrane. Functionally, the phosphoenolpyruvate-dependent sugar phosphotransferase system (PTS), a major carbohydrate active transport system, catalyzes the phosphorylation of incoming sugar substrates concomitant with their translocation across the cell membrane. The enzyme II complex composed of GatA, GatB and GatC is involved in galactitol transport. This is PTS system galactitol-specific EIIC component (gatC) from Escherichia coli O157:H7.